The chain runs to 1319 residues: DNA (cytosine-5)-methyltransferase CMT2 (1319 aa).

Residues 1–15 are compositionally biased toward pro residues; sequence METPPPDPVSPPPPA. Disordered regions lie at residues 1-34, 142-189, 265-302, and 442-468; these read METP…GGFS, ALDS…VASS, SAAS…KLPA, and KSRV…RART. A compositionally biased stretch (polar residues) spans 266–279; it reads AASSMPLNQNGDSS. Residues 285–296 show a composition bias toward basic and acidic residues; it reads RVADSRKSRSSE. In terms of domain architecture, BAH spans 602-719; sequence YTFCIGECAF…IDYSTFSTIE (118 aa). The region spanning 758–1296 is the SAM-dependent MTase C5-type domain; that stretch reads LSLLDLYCGC…YALAMAYLKK (539 aa). The Chromo domain maps to 863 to 928; it reads FEVWKLVDIC…EGHRQRILPR (66 aa). C941 is an active-site residue.

Its subcellular location is the nucleus. It carries out the reaction a 2'-deoxycytidine in DNA + S-adenosyl-L-methionine = a 5-methyl-2'-deoxycytidine in DNA + S-adenosyl-L-homocysteine + H(+). Its function is as follows. Involved in CpXpG DNA methylation. This is DNA (cytosine-5)-methyltransferase CMT2 from Oryza sativa subsp. japonica (Rice).